The sequence spans 195 residues: Nicotinamide riboside kinase 1 (195 aa).

Residue Gly-10–Thr-18 coordinates ATP. Residues Thr-17 and Asp-36 each contribute to the Mg(2+) site. The active-site Proton acceptor is Asp-36. Substrate-binding positions include Asp-36–Phe-39 and Tyr-55–Asp-56. Arg-128 lines the ATP pocket. Residues Arg-129 and Tyr-134 to Glu-135 contribute to the substrate site. ATP contacts are provided by residues Arg-132–Tyr-134 and Arg-172–Glu-174.

This sequence belongs to the uridine kinase family. NRK subfamily. In terms of assembly, monomer.

It carries out the reaction beta-nicotinamide D-riboside + ATP = beta-nicotinamide D-ribonucleotide + ADP + H(+). The enzyme catalyses beta-D-ribosylnicotinate + ATP = nicotinate beta-D-ribonucleotide + ADP + H(+). The protein operates within cofactor biosynthesis; NAD(+) biosynthesis. In terms of biological role, catalyzes the phosphorylation of nicotinamide riboside (NR) and nicotinic acid riboside (NaR) to form nicotinamide mononucleotide (NMN) and nicotinic acid mononucleotide (NaMN). The protein is Nicotinamide riboside kinase 1 (Nmrk1) of Mus musculus (Mouse).